A 130-amino-acid chain; its full sequence is Small ribosomal subunit protein uS9 (130 aa).

Residues glycine 102–arginine 130 are disordered. Over residues lysine 111–arginine 130 the composition is skewed to basic residues.

The protein belongs to the universal ribosomal protein uS9 family.

In Finegoldia magna (strain ATCC 29328 / DSM 20472 / WAL 2508) (Peptostreptococcus magnus), this protein is Small ribosomal subunit protein uS9.